The chain runs to 214 residues: External core antigen (214 aa).

Positions 1-19 are cleaved as a signal peptide; that stretch reads MQLFHLCLIISCTCPTFQA. An HBEAG region spans residues 25-27; sequence GWL. Positions 165-214 are disordered; sequence NAPILSTLPETTVVRRRDRGRSPRRRTPSPRRRRSQSPRRRRSQSRESQC. Residues 178–207 show a composition bias toward basic residues; that stretch reads VRRRDRGRSPRRRTPSPRRRRSQSPRRRRS. The 1; half-length repeat unit spans residues 186–192; the sequence is SPRRRTP. Positions 186–208 are 3 X 8 AA repeats of S-P-R-R-R-R-S-Q; the sequence is SPRRRTPSPRRRRSQSPRRRRSQ. A propeptide spanning residues 186-214 is cleaved from the precursor; it reads SPRRRTPSPRRRRSQSPRRRRSQSRESQC. A run of 2 repeats spans residues 193–200 and 201–208.

It belongs to the orthohepadnavirus precore antigen family. As to quaternary structure, homodimerizes. Post-translationally, phosphorylated. In terms of processing, cleaved by host furin.

It localises to the secreted. The protein resides in the host nucleus. Its function is as follows. May regulate immune response to the intracellular capsid in acting as a T-cell tolerogen, by having an immunoregulatory effect which prevents destruction of infected cells by cytotoxic T-cells. This immune regulation may predispose to chronicity during perinatal infections and prevent severe liver injury during adult infections. The polypeptide is External core antigen (Homo sapiens (Human)).